A 414-amino-acid chain; its full sequence is Poly(3-hydroxyalkanoate) depolymerase C (414 aa).

The N-terminal stretch at 1–37 is a signal peptide; that stretch reads MLAKQIKKANSRSTLLRKSLLFAAPIILAVSSSSVYA. The active-site Charge relay system is serine 154.

This sequence belongs to the AB hydrolase superfamily. Lipase family.

Its subcellular location is the secreted. Functionally, specific for poly(hydroxyalkanoic acid) consisting of monomers of four or five carbon atoms and for P-nitrophenylbutyrate as substrates. This is Poly(3-hydroxyalkanoate) depolymerase C (phaZ1) from Paucimonas lemoignei (Pseudomonas lemoignei).